The primary structure comprises 986 residues: MATYTSTIQIGSIECKLPYSPAPFGLVAGKREVSTTTDPFASLEMQLSARLRRQEFATIRTSKNGTCMYRYKTDAQIARIQKKREEREREEYNFQMAASSVVSKITIAGGEPPSKLESQVRKGVIHTTPRMRTAKTYRTPKLTEGQMNHLIKQVKQIMSTKGGSVQLISKKSTHVHYKEVLGSHRAVVCTAHMRGLRKRVDFRCDKWTVVRLQHLARTDKWTNQVRATDLRKGDSGVILSNTNLKGHFGRSSEGLFIVRGSHEGKIYDARSKVTQGVMDSMVQFSSAESFWEGLDGNWAQMRYPTDHTCVAGIPVEDCGRVAAIMTHSILPCYKITCPTCAQQYANLPASDLLKILHKHASDGLNRLGADKDRFVHVKKFLTILEHLTEPVDLSLEIFNEVFKSIGEKQQSPFKNLNILNNFFLKGKENTAREWQVAQLSLLELARFQKNRTDNIKKGDISFFRNKLSAKANWNLYLSCDNQLDKNANFLWGQREYHAKRFFSNYFEEIDPAKGYSAYENRLHPNGTRKLAIGNLIVPLDLAEFRRKMKGDYKRQPGVSKKCTSSKDGNYVYPCCCTTLDDGSAVESTFYPPTKKHLVIGNSGDQKYVDLPKGNSEMLYIARQGFCYINIFLAMLINISEEDAKDFTKKVRDMCVPKLGTWPTMMDLATTCAQMKIFYPDVHDAELPRILVDHETQTCHVVDSFGSQTTGYHILKASSVSQLILFANDELESDIKHYRVGGIPNACPELGSTISPFREGGVIMSESAALKLLLKGIFRPKVMRQLLLDEPYLLILSILSPGILMAMYNNGIFELAVKLWINEKQSIAMIASLLSALALRVSAAETLVAQRIIIDTAATDLLDATCDGFNLHLTYPTALMVLQVVKNRNECDDTLFKAGFPSYNTSVVQIMEKKLSKSLERCLERFNLAGKIIRNMVLIQSKTLYHSVHKTHRKGRFERVIQHITTSILGPRCPGGQRHCLRIERAI.

The Peptidase S30 domain maps to 141-284 (KLTEGQMNHL…QGVMDSMVQF (144 aa)). Active-site for P1 proteinase activity residues include H192, D201, and S235. An Involved in interaction with stylet and aphid transmission motif is present at residues 334–337 (KITC). The short motif at 592–594 (PTK) is the Involved in virions binding and aphid transmission element. A Peptidase C6 domain is found at 618–740 (LYIARQGFCY…ESDIKHYRVG (123 aa)). Active-site for helper component proteinase activity residues include C626 and H699.

The protein belongs to the potyviridae P3N-PIPO polyprotein family. As to quaternary structure, interacts (via PIPO domain) with host PCaP1 protein; this interaction may help to anchor the movement complex to the plasma membrane from which the complex could move to the plasmodesmata. Potyviral RNA is expressed as two polyproteins which undergo post-translational proteolytic processing. Genome polyprotein is processed by NIa-pro, P1 and HC-pro proteinases resulting in the production of at least ten individual proteins. P3N-PIPO is cleaved by P1 and HC-pro proteinases resulting in the production of three individual proteins. The P1 proteinase and the HC-pro cleave only their respective C-termini autocatalytically.

The protein resides in the host cell junction. It localises to the host plasmodesma. It catalyses the reaction Hydrolyzes a Gly-|-Gly bond at its own C-terminus, commonly in the sequence -Tyr-Xaa-Val-Gly-|-Gly, in the processing of the potyviral polyprotein.. Functionally, required for aphid transmission and also has proteolytic activity. Only cleaves a Gly-Gly dipeptide at its own C-terminus. Interacts with virions and aphid stylets. Acts as a suppressor of RNA-mediated gene silencing, also known as post-transcriptional gene silencing (PTGS), a mechanism of plant viral defense that limits the accumulation of viral RNAs. May have RNA-binding activity. Its function is as follows. Allows efficient cell to cell propagation, by bypassing the host cell wall barrier. Transports viral genome to neighboring plant cells directly through plasmosdesmata, without any budding. This chain is P3N-PIPO polyprotein, found in Capsicum (peppers).